A 249-amino-acid chain; its full sequence is Isoprenyl transferase (249 aa).

D25 is a catalytic residue. D25 is a binding site for Mg(2+). Substrate-binding positions include 26-29 (GNGR), W30, R38, H42, and 70-72 (STE). The active-site Proton acceptor is N73. Substrate-binding positions include W74, R76, R197, and 203–205 (RLS). Residue E216 participates in Mg(2+) binding.

It belongs to the UPP synthase family. In terms of assembly, homodimer. Mg(2+) serves as cofactor.

Its function is as follows. Catalyzes the condensation of isopentenyl diphosphate (IPP) with allylic pyrophosphates generating different type of terpenoids. This Streptococcus pyogenes serotype M6 (strain ATCC BAA-946 / MGAS10394) protein is Isoprenyl transferase.